A 1087-amino-acid chain; its full sequence is A-kinase anchor protein 9 (1087 aa).

Residues 5–461 (EVQCQAEKVR…REREKMERIQ (457 aa)) adopt a coiled-coil conformation. A PKA-RII subunit binding domain region spans residues 559–572 (SLQKVLEEKVAAAL). Residues 614-773 (MESDVSALTW…SEKEDKTEVQ (160 aa)) adopt a coiled-coil conformation. The segment covering 667 to 685 (VQDSETKQRERERQSRLHG) has biased composition (basic and acidic residues). Positions 667 to 691 (VQDSETKQRERERQSRLHGDLGVLE) are disordered.

Interacts with the regulatory region of protein kinase N (PKN), protein phosphatase 2A (PP2A), protein phosphatase 1 (PP1) and the immature non-phosphorylated form of PKC epsilon. Interacts with CIP4 and FNBP1. Interacts with chloride intracellular channel proteins CLIC1, CLIC4 and CLIC5. CSNK1D binding promotes its centrosomal subcellular location. Interacts with GM130/GOLGA2; leading to recruitment to the Golgi apparatus. Interacts with KCNQ1; targets protein kinase A (PKA) catalytic and regulatory subunits and protein phosphatase 1 (PP1), to the heterodimer KCNQ1-KCNE1. Interacts with PDE4DIP; this interaction stabilizes both proteins. In complex with PDE4DIP, recruits CAMSAP2 to the Golgi apparatus. Forms a pericentrosomal complex with CDK5RAP2, EB1/MAPRE1 and PDE4DIP; within this complex, MAPRE1 binding to CDK5RAP2 may be mediated by PDE4DIP. The interaction with PDE4DIP is isoform-specific. Interacts with MAPRE1 and MAPRE3. Interacts (via C-terminus) with CAMSAP2; this interaction is much stronger in the presence of PDE4DIP. Interacts with CAMSAP3. Interacts (via C-terminus) with the gamma-tubulin ring complex (gamma-TuRC), composed of gamma-tubulin, TUBGCP2, TUBGCP3, TUBGCP4, TUBGCP5 and TUBGCP6. In terms of tissue distribution, highly expressed in gastric parietal cells.

It localises to the golgi apparatus. The protein resides in the cytoplasm. Its subcellular location is the cytoskeleton. The protein localises to the microtubule organizing center. It is found in the centrosome. Its function is as follows. Scaffolding protein that assembles several protein kinases and phosphatases on the centrosome and Golgi apparatus. Required to maintain the integrity of the Golgi apparatus. Required for microtubule nucleation at the cis-side of the Golgi apparatus. Required for association of the centrosomes with the poles of the bipolar mitotic spindle during metaphase. In complex with PDE4DIP, recruits CAMSAP2 to the Golgi apparatus and tethers non-centrosomal minus-end microtubules to the Golgi, an important step for polarized cell movement. In complex with PDE4DIP, EB1/MAPRE1 and CDK5RAP2, contributes to microtubules nucleation and extension also from the centrosome to the cell periphery. The interaction with PDE4DIP is isoform-specific. The sequence is that of A-kinase anchor protein 9 (AKAP9) from Oryctolagus cuniculus (Rabbit).